A 302-amino-acid chain; its full sequence is Rhomboid-related protein 2 (302 aa).

The disordered stretch occupies residues 1–38 (MAVAHEMEMESVNLNMEREGKEEPEEEKMKGNGEGKDF). Positions 16–38 (MEREGKEEPEEEKMKGNGEGKDF) are enriched in basic and acidic residues. A run of 7 helical transmembrane segments spans residues 71–91 (PLFI…YAVW), 127–147 (LVHA…VLGI), 158–178 (VGLV…IFDP), 182–202 (LVGA…NVIV), 211–231 (FGIV…GFAL), 244–264 (VSFA…YTVF), and 277–297 (FWIA…FNIF). Catalysis depends on Ser186, which acts as the Nucleophile. The active site involves His249.

This sequence belongs to the peptidase S54 family. In terms of processing, proteolytic processing of the proenzyme produces an N- and a C-terminal fragment. The processing is required for activation of the protease.

Its subcellular location is the cell membrane. The catalysed reaction is Cleaves type-1 transmembrane domains using a catalytic dyad composed of serine and histidine that are contributed by different transmembrane domains.. Functionally, involved in regulated intramembrane proteolysis and the subsequent release of functional polypeptides from their membrane anchors. Known substrate: EFNB3. This chain is Rhomboid-related protein 2 (Rhbdl2), found in Mus musculus (Mouse).